Consider the following 454-residue polypeptide: CCA-adding enzyme (454 aa).

Serine 53 and lysine 56 together coordinate ATP. Residues serine 53 and lysine 56 each coordinate CTP. Mg(2+) contacts are provided by aspartate 65, aspartate 67, and aspartate 119. Histidine 142, lysine 161, and tyrosine 170 together coordinate ATP. Histidine 142, lysine 161, and tyrosine 170 together coordinate CTP.

The protein belongs to the tRNA nucleotidyltransferase/poly(A) polymerase family. Archaeal CCA-adding enzyme subfamily. In terms of assembly, homodimer. Requires Mg(2+) as cofactor.

The catalysed reaction is a tRNA precursor + 2 CTP + ATP = a tRNA with a 3' CCA end + 3 diphosphate. It catalyses the reaction a tRNA with a 3' CCA end + 2 CTP + ATP = a tRNA with a 3' CCACCA end + 3 diphosphate. In terms of biological role, catalyzes the addition and repair of the essential 3'-terminal CCA sequence in tRNAs without using a nucleic acid template. Adds these three nucleotides in the order of C, C, and A to the tRNA nucleotide-73, using CTP and ATP as substrates and producing inorganic pyrophosphate. tRNA 3'-terminal CCA addition is required both for tRNA processing and repair. Also involved in tRNA surveillance by mediating tandem CCA addition to generate a CCACCA at the 3' terminus of unstable tRNAs. While stable tRNAs receive only 3'-terminal CCA, unstable tRNAs are marked with CCACCA and rapidly degraded. The chain is CCA-adding enzyme from Thermococcus gammatolerans (strain DSM 15229 / JCM 11827 / EJ3).